Reading from the N-terminus, the 205-residue chain is Glycerol-3-phosphate acyltransferase (205 aa).

Over 1-3 (MSA) the chain is Periplasmic. A helical membrane pass occupies residues 4-24 (IAPGMILIAYLCGSISSAILV). Residues 25-52 (CRLCGLPDPRTSGSGNPGATNVLRIGGK) lie on the Cytoplasmic side of the membrane. A helical membrane pass occupies residues 53 to 73 (GAAVAVLIFDVLKGMLPVWGA). Residues 74–80 (YELGVSP) are Periplasmic-facing. Residues 81-101 (FWLGLIAIAACLGHIWPVFFG) traverse the membrane as a helical segment. Residues 102-111 (FKGGKGVATA) lie on the Cytoplasmic side of the membrane. The chain crosses the membrane as a helical span at residues 112 to 132 (FGAIAPIGWDLTGVMAGTWLL). Topologically, residues 133–137 (TVLLS) are periplasmic. Residues 138–158 (GYSSLGAIVSALIAPFYVWWF) form a helical membrane-spanning segment. Residues 159–205 (KPQFTFPVSMLSCLILLRHHDNIQRLWRRQETKIWTKFKRKREKDPE) are Cytoplasmic-facing.

It belongs to the PlsY family. As to quaternary structure, probably interacts with PlsX.

The protein localises to the cell inner membrane. It catalyses the reaction sn-glycerol 3-phosphate + an acyl-CoA = a 1-acyl-sn-glycero-3-phosphate + CoA. The catalysed reaction is a fatty acyl-[ACP] + sn-glycerol 3-phosphate = a 1-acyl-sn-glycero-3-phosphate + holo-[ACP]. The protein operates within lipid metabolism; phospholipid metabolism. In terms of biological role, catalyzes the transfer of an acyl group from acyl-ACP to glycerol-3-phosphate (G3P) to form lysophosphatidic acid (LPA). This enzyme can also utilize acyl-CoA as fatty acyl donor, but not acyl-PO(4). The polypeptide is Glycerol-3-phosphate acyltransferase (Escherichia coli O8 (strain IAI1)).